The sequence spans 401 residues: Argininosuccinate synthase (401 aa).

Residue 8 to 16 coordinates ATP; that stretch reads AYSGGLDTS. Y87 provides a ligand contact to L-citrulline. G117 provides a ligand contact to ATP. Residues T119, N123, and D124 each coordinate L-aspartate. L-citrulline is bound at residue N123. Positions 127, 175, 259, and 271 each coordinate L-citrulline.

It belongs to the argininosuccinate synthase family. Type 1 subfamily. Homotetramer.

It is found in the cytoplasm. It catalyses the reaction L-citrulline + L-aspartate + ATP = 2-(N(omega)-L-arginino)succinate + AMP + diphosphate + H(+). It participates in amino-acid biosynthesis; L-arginine biosynthesis; L-arginine from L-ornithine and carbamoyl phosphate: step 2/3. The chain is Argininosuccinate synthase from Paenarthrobacter aurescens (strain TC1).